Here is a 147-residue protein sequence, read N- to C-terminus: Large ribosomal subunit protein uL15 (147 aa).

Residues 1–13 (MELHSLKAAEGSR) are compositionally biased toward basic and acidic residues. The tract at residues 1-57 (MELHSLKAAEGSRKVRNRVGRGTSSGNGKTSGRGQKGQKSRSGGGVRPGFEGGQTEL) is disordered. 2 stretches are compositionally biased toward gly residues: residues 23 to 35 (TSSG…GRGQ) and 42 to 52 (SGGGVRPGFEG).

Belongs to the universal ribosomal protein uL15 family. In terms of assembly, part of the 50S ribosomal subunit.

In terms of biological role, binds to the 23S rRNA. This chain is Large ribosomal subunit protein uL15, found in Lactococcus lactis subsp. cremoris (strain MG1363).